A 180-amino-acid polypeptide reads, in one-letter code: MFTFIKKVIKTGTATSSYPLEPIAVDKNFRGKPEQNPQQCIGCAACVNACPSNALTVETDLATGELAWEFNLGHCIFCGRCEEVCPTAAIKLSQEYELAVWKKEDFLQQSRFALCNCRVCNRPFAVQKEIDYAIALLKHNGDSRAENHRESFETCPECKRQKCLVPSDRIELTRHMKEAI.

4Fe-4S ferredoxin-type domains follow at residues 31-60 and 66-95; these read GKPE…VETD and LAWE…LSQE. [4Fe-4S] cluster contacts are provided by C40, C43, C46, C50, C75, C78, C81, and C85.

FHL comprises of a formate dehydrogenase, unidentified electron carriers and a hydrogenase (isoenzyme 3). In this non-energy conserving pathway, molecular hydrogen and carbodioxide are released from formate.

Probable electron transfer protein for hydrogenase 3. This is Formate hydrogenlyase subunit 6 (hycF) from Escherichia coli (strain K12).